The primary structure comprises 299 residues: Large ribosomal subunit protein uL18 (299 aa).

The protein belongs to the universal ribosomal protein uL18 family. Component of the large ribosomal subunit (LSU).

It is found in the cytoplasm. Its subcellular location is the nucleus. In terms of biological role, component of the ribosome, a large ribonucleoprotein complex responsible for the synthesis of proteins in the cell. The small ribosomal subunit (SSU) binds messenger RNAs (mRNAs) and translates the encoded message by selecting cognate aminoacyl-transfer RNA (tRNA) molecules. The large subunit (LSU) contains the ribosomal catalytic site termed the peptidyl transferase center (PTC), which catalyzes the formation of peptide bonds, thereby polymerizing the amino acids delivered by tRNAs into a polypeptide chain. The nascent polypeptides leave the ribosome through a tunnel in the LSU and interact with protein factors that function in enzymatic processing, targeting, and the membrane insertion of nascent chains at the exit of the ribosomal tunnel. The sequence is that of Large ribosomal subunit protein uL18 (RpL5) from Bombyx mori (Silk moth).